A 128-amino-acid polypeptide reads, in one-letter code: Organic solute transporter subunit beta (128 aa).

The Extracellular segment spans residues 1 to 30 (MDHSAEKAAANAEVPQELLEEMLWYFRAED). A helical transmembrane segment spans residues 31-53 (AAPWNYSILVLAVLVVMTSMFLL). The Cytoplasmic segment spans residues 54–128 (RRSILANRNR…FLPDPQETES (75 aa)). Disordered regions lie at residues 61–80 (RNRK…HLDD) and 101–128 (PDLA…ETES). Basic and acidic residues-rich tracts occupy residues 66–80 (QPQD…HLDD) and 101–115 (PDLA…EKDS). At serine 116 the chain carries Phosphoserine.

This sequence belongs to the OST-beta family. As to quaternary structure, interacts with SLC51A. The Ost-alpha/Ost-beta complex is a heterodimer composed of alpha (SLC51A) and beta (SLC51B) subunit; induces the transport of SLC51A from the endoplasmic reticulum to the plasma membrane. Present at high level in ileum. In ileum, it is restricted to the apical domain on the mature villus enterocytes with little detectable expression in the goblet cells or crypt enterocytes (at protein level). Expressed in kidney but not in heart, brain, liver, spleen, embryo, lung, thymus, ovary nor testis.

It localises to the cell membrane. It carries out the reaction taurocholate(out) = taurocholate(in). The enzyme catalyses tauroursodeoxycholate(out) = tauroursodeoxycholate(in). It catalyses the reaction glycoursodeoxycholate(out) = glycoursodeoxycholate(in). The catalysed reaction is glycocholate(out) = glycocholate(in). It carries out the reaction taurochenodeoxycholate(out) = taurochenodeoxycholate(in). The enzyme catalyses glycochenodeoxycholate(out) = glycochenodeoxycholate(in). It catalyses the reaction taurodeoxycholate(out) = taurodeoxycholate(in). The catalysed reaction is glycodeoxycholate(out) = glycodeoxycholate(in). It carries out the reaction prostaglandin E2(out) = prostaglandin E2(in). The enzyme catalyses estrone 3-sulfate(out) = estrone 3-sulfate(in). It catalyses the reaction dehydroepiandrosterone 3-sulfate(out) = dehydroepiandrosterone 3-sulfate(in). Essential component of the Ost-alpha/Ost-beta complex, a heterodimer that acts as the intestinal basolateral transporter responsible for bile acid export from enterocytes into portal blood. The Ost-alpha/Ost-beta complex efficiently transports the major species of bile acids (taurocholate). Taurine conjugates are transported more efficiently across the basolateral membrane than glycine-conjugated bile acids. Can also transport steroids such as estrone 3-sulfate and dehydroepiandrosterone 3-sulfate, therefore playing a role in the enterohepatic circulation of sterols. Able to transport eicosanoids such as prostaglandin E2. Modulates SLC51A glycosylation, membrane trafficking and stability activities. In Mus musculus (Mouse), this protein is Organic solute transporter subunit beta (Slc51b).